Consider the following 384-residue polypeptide: Alpha-2B adrenergic receptor (384 aa).

Residues alanine 1–leucine 25 traverse the membrane as a helical segment. The Cytoplasmic portion of the chain corresponds to threonine 26–leucine 36. A helical transmembrane segment spans residues phenylalanine 37 to leucine 62. The Extracellular portion of the chain corresponds to glycine 63–cysteine 72. Cysteine 72 and cysteine 151 are oxidised to a cystine. Residues glutamate 73 to leucine 95 form a helical membrane-spanning segment. The Cytoplasmic segment spans residues aspartate 96–residue 117. The chain crosses the membrane as a helical span at residues glycine 118–aspartate 140. At glutamine 141–glutamate 156 the chain is on the extracellular side. Residues alanine 157–leucine 180 form a helical membrane-spanning segment. At arginine 181–valine 348 the chain is on the cytoplasmic side. Positions glycine 193–proline 306 are disordered. The segment covering proline 288 to proline 306 has biased composition (low complexity). A helical transmembrane segment spans residues leucine 349–isoleucine 372. The Extracellular portion of the chain corresponds to cysteine 373 to histidine 381. Residues glycine 382–phenylalanine 384 form a helical membrane-spanning segment.

The protein belongs to the G-protein coupled receptor 1 family. Adrenergic receptor subfamily. ADRA2B sub-subfamily. As to quaternary structure, interacts with RAB26. Interacts with PPP1R9B. Interacts with GGA1, GGA2 and GGA3.

The protein localises to the cell membrane. Functionally, alpha-2 adrenergic receptors mediate the catecholamine-induced inhibition of adenylate cyclase through the action of G proteins. This chain is Alpha-2B adrenergic receptor (ADRA2B), found in Echinops telfairi (Lesser hedgehog tenrec).